The following is a 535-amino-acid chain: Light-independent protochlorophyllide reductase subunit B (535 aa).

Aspartate 36 contacts [4Fe-4S] cluster. Aspartate 292 acts as the Proton donor in catalysis. 428-429 provides a ligand contact to substrate; the sequence is GL. A disordered region spans residues 446 to 483; sequence DEASPSESAPHASNGHEDVAGGSTAQSVPSHAATEGDG.

This sequence belongs to the ChlB/BchB/BchZ family. As to quaternary structure, protochlorophyllide reductase is composed of three subunits; BchL, BchN and BchB. Forms a heterotetramer of two BchB and two BchN subunits. It depends on [4Fe-4S] cluster as a cofactor.

The catalysed reaction is chlorophyllide a + oxidized 2[4Fe-4S]-[ferredoxin] + 2 ADP + 2 phosphate = protochlorophyllide a + reduced 2[4Fe-4S]-[ferredoxin] + 2 ATP + 2 H2O. Its pathway is porphyrin-containing compound metabolism; bacteriochlorophyll biosynthesis (light-independent). In terms of biological role, component of the dark-operative protochlorophyllide reductase (DPOR) that uses Mg-ATP and reduced ferredoxin to reduce ring D of protochlorophyllide (Pchlide) to form chlorophyllide a (Chlide). This reaction is light-independent. The NB-protein (BchN-BchB) is the catalytic component of the complex. The sequence is that of Light-independent protochlorophyllide reductase subunit B from Chlorobium limicola (strain DSM 245 / NBRC 103803 / 6330).